The primary structure comprises 95 residues: Large ribosomal subunit protein uL23 (95 aa).

Belongs to the universal ribosomal protein uL23 family. Part of the 50S ribosomal subunit. Contacts protein L29, and trigger factor when it is bound to the ribosome.

Functionally, one of the early assembly proteins it binds 23S rRNA. One of the proteins that surrounds the polypeptide exit tunnel on the outside of the ribosome. Forms the main docking site for trigger factor binding to the ribosome. The protein is Large ribosomal subunit protein uL23 of Solibacter usitatus (strain Ellin6076).